Here is a 43-residue protein sequence, read N- to C-terminus: MVCKGCGTNCKCQDTKCGDNCACNQDCKCVCKNGPKDQCCKSK.

This sequence belongs to the metallothionein superfamily. Type 5 family.

This protein binds cations of several transition elements. Thought to be involved in metal ion homeostasis. The sequence is that of Metallothionein-3 (MtnC) from Drosophila melanogaster (Fruit fly).